A 435-amino-acid chain; its full sequence is AP-2 complex subunit mu (435 aa).

Serine 45 carries the post-translational modification Phosphoserine. Position 156 is a phosphothreonine (threonine 156). The 265-residue stretch at 170–434 (RNELFLDVLE…IGRSGIYETR (265 aa)) folds into the MHD domain. 3 residues coordinate a 1,2-diacyl-sn-glycero-3-phospho-(1D-myo-inositol-3,4,5-trisphosphate): lysine 341, lysine 345, and lysine 354.

The protein belongs to the adaptor complexes medium subunit family. As to quaternary structure, adaptor protein complex 2 (AP-2) is a heterotetramer composed of two large adaptins (alpha-type subunit AP2A1 or AP2A2 and beta-type subunit AP2B1), a medium adaptin (mu-type subunit AP2M1) and a small adaptin (sigma-type subunit AP2S1). Interacts with ATP6V1H and MEGF10. Interacts with EGFR. Interacts with PIP5K1C; tyrosine phosphorylation of PIP5K1C weakens the interaction. Interacts with KIAA0319; required for clathrin-mediated endocytosis of KIAA0319. Interacts with DVL2 (via DEP domain). Interacts with KCNQ1; mediates estrogen-induced internalization via clathrin-coated vesicles. Together with AP2A1 or AP2A2 and AP2B1, it interacts with ADAM10; this interaction facilitates ADAM10 endocytosis from the plasma membrane during long-term potentiation in hippocampal neurons. Probably interacts with ACE2 (via endocytic sorting signal motif); the interaction is inhibited by ACE2 phosphorylation. Interacts with RALBP1; the interaction is direct. Interacts with TMEM106B (via N-terminus). Phosphorylation at Thr-156 increases the affinity of the AP-2 complex for cargo membrane proteins during the initial stages of endocytosis.

It localises to the cell membrane. It is found in the membrane. The protein resides in the coated pit. In terms of biological role, component of the adaptor protein complex 2 (AP-2). Adaptor protein complexes function in protein transport via transport vesicles in different membrane traffic pathways. Adaptor protein complexes are vesicle coat components and appear to be involved in cargo selection and vesicle formation. AP-2 is involved in clathrin-dependent endocytosis in which cargo proteins are incorporated into vesicles surrounded by clathrin (clathrin-coated vesicles, CCVs) which are destined for fusion with the early endosome. The clathrin lattice serves as a mechanical scaffold but is itself unable to bind directly to membrane components. Clathrin-associated adaptor protein (AP) complexes which can bind directly to both the clathrin lattice and to the lipid and protein components of membranes are considered to be the major clathrin adaptors contributing the CCV formation. AP-2 also serves as a cargo receptor to selectively sort the membrane proteins involved in receptor-mediated endocytosis. AP-2 seems to play a role in the recycling of synaptic vesicle membranes from the presynaptic surface. AP-2 recognizes Y-X-X-[FILMV] (Y-X-X-Phi) and [ED]-X-X-X-L-[LI] endocytosis signal motifs within the cytosolic tails of transmembrane cargo molecules. AP-2 may also play a role in maintaining normal post-endocytic trafficking through the ARF6-regulated, non-clathrin pathway. During long-term potentiation in hippocampal neurons, AP-2 is responsible for the endocytosis of ADAM10. The AP-2 mu subunit binds to transmembrane cargo proteins; it recognizes the Y-X-X-Phi motifs. The surface region interacting with to the Y-X-X-Phi motif is inaccessible in cytosolic AP-2, but becomes accessible through a conformational change following phosphorylation of AP-2 mu subunit at Thr-156 in membrane-associated AP-2. The membrane-specific phosphorylation event appears to involve assembled clathrin which activates the AP-2 mu kinase AAK1. Plays a role in endocytosis of frizzled family members upon Wnt signaling. The polypeptide is AP-2 complex subunit mu (AP2M1) (Pongo abelii (Sumatran orangutan)).